Consider the following 559-residue polypeptide: Transmembrane E3 ubiquitin-protein ligase FLY2 (559 aa).

The signal sequence occupies residues 1–29 (MNNLGNFGVWGFGFFSLSIWFAVLQQANG). Residues 30–259 (LRPIRETARS…TSINVEVYYN (230 aa)) lie on the Lumenal side of the membrane. Residues 260–280 (KAVNYTLMVTFVSFLQVLLLI) traverse the membrane as a helical segment. The Cytoplasmic portion of the chain corresponds to 281-294 (RQMEHSNTQSGAAK). A helical transmembrane segment spans residues 295–315 (VSIVMIGQQAIMDSYLCLLHL). The Lumenal segment spans residues 316 to 318 (TAG). Residues 319-339 (ILVESLFNAFATAAFFKFVVF) form a helical membrane-spanning segment. Topologically, residues 340–370 (SIFEMRYLLSIWKATRPSTSGEGWETMRREL) are cytoplasmic. A helical transmembrane segment spans residues 371 to 391 (SFLYSRFYGILLGGILLMYEF). The Lumenal portion of the chain corresponds to 392 to 394 (HNY). A helical transmembrane segment spans residues 395-415 (MRPILLLMYSFWIPQIVANVV). The Cytoplasmic segment spans residues 416 to 423 (RDSRKPLH). Residues 424-444 (PYYILGMTVTRLAIPLYVFGC) form a helical membrane-spanning segment. The Lumenal portion of the chain corresponds to 445-458 (PKNFMRVEPSKAWC). The chain crosses the membrane as a helical span at residues 459–479 (VSLCAFMGFQAGVLLLQHYFG). Over 480–559 (SRCFVPRKLL…PTCRRPLPPA (80 aa)) the chain is Cytoplasmic. An RING-type; atypical zinc finger spans residues 509–553 (CVICMTTIDLRHRINDCMVTPCEHIFHSGCLQRWMDIKMECPTCR).

Highly expressed in stems. Expressed in root xylem and seed coat.

The protein resides in the endomembrane system. The catalysed reaction is S-ubiquitinyl-[E2 ubiquitin-conjugating enzyme]-L-cysteine + [acceptor protein]-L-lysine = [E2 ubiquitin-conjugating enzyme]-L-cysteine + N(6)-ubiquitinyl-[acceptor protein]-L-lysine.. The protein operates within protein modification; protein ubiquitination. In terms of biological role, E3 ubiquitin-protein ligase that may be involved in xylem development. The protein is Transmembrane E3 ubiquitin-protein ligase FLY2 of Arabidopsis thaliana (Mouse-ear cress).